Here is a 415-residue protein sequence, read N- to C-terminus: MNFIEDLKWRGALNQITDEAGLLEAMASGKVGAYVGTDPTADSLHLGHLIPFMVLKRFQKAGGKAVIIIGGATGAIGDPRPTTERQLLSSEQLAENEKGITAQVTKLFGDNDTRIVNNNDWLGQLTLTDFLRDYGKLFSINVMLKKDVVASRLETGISFTEFTYQVLQGIDFHELWRREDVKLQIGGSDQWGNITSGIDLIHSLEGNEAKAFGLTIPLMTDSTGKKFGKSEGNAIWLDPKKTSPYTFYQFWLNQGDADVVKYLKYFTFLGSEEIDDLAEAVATNPGERLAQRRLAQEVTKFVHGESAVKEAEDLSTALFSGNVATLSAAQIADAFGGVPSFEAANTVKNIVDFLVDGGVEASKRQAREDVANGAISINGEKVTDVAAEINPLSHYDGQFVLVRRGKKKYFLGKIK.

Residue tyrosine 34 participates in L-tyrosine binding. The 'HIGH' region signature appears at 39-48 (PTADSLHLGH). L-tyrosine-binding residues include tyrosine 164 and glutamine 168. The short motif at 226–230 (KFGKS) is the 'KMSKS' region element. Position 229 (lysine 229) interacts with ATP. The S4 RNA-binding domain occupies 348–415 (KNIVDFLVDG…KKKYFLGKIK (68 aa)).

Belongs to the class-I aminoacyl-tRNA synthetase family. TyrS type 1 subfamily. As to quaternary structure, homodimer.

It localises to the cytoplasm. The catalysed reaction is tRNA(Tyr) + L-tyrosine + ATP = L-tyrosyl-tRNA(Tyr) + AMP + diphosphate + H(+). Its function is as follows. Catalyzes the attachment of tyrosine to tRNA(Tyr) in a two-step reaction: tyrosine is first activated by ATP to form Tyr-AMP and then transferred to the acceptor end of tRNA(Tyr). In Leuconostoc citreum (strain KM20), this protein is Tyrosine--tRNA ligase.